The primary structure comprises 206 residues: Probable metallo-hydrolase MJ0888 (206 aa).

The Zn(2+) site is built by histidine 55, histidine 57, aspartate 59, histidine 60, histidine 130, aspartate 147, and histidine 190.

The protein belongs to the metallo-beta-lactamase superfamily. It depends on Zn(2+) as a cofactor.

The sequence is that of Probable metallo-hydrolase MJ0888 from Methanocaldococcus jannaschii (strain ATCC 43067 / DSM 2661 / JAL-1 / JCM 10045 / NBRC 100440) (Methanococcus jannaschii).